The chain runs to 89 residues: MPSELEKALSNLIDVYHNYSNIQGNHHALYKNDFKKMVTTECPQFVQNINIENLFRELDINSDNAINFEEFLAMVIKVGVASHKDSHKE.

EF-hand domains are found at residues 13 to 48 (IDVY…FVQN) and 46 to 81 (VQNI…VGVA). The Zn(2+) site is built by His-17 and His-27. Asp-33 serves as a coordination point for Ca(2+). Cys-42 is subject to S-nitrosocysteine. Ca(2+) is bound by residues Asp-59, Asn-61, Asp-63, and Glu-70. A Zn(2+)-binding site is contributed by His-83.

It belongs to the S-100 family. Homodimer. Preferentially exists as a heterodimer or heterotetramer with S100A9 known as calprotectin (S100A8/A9). Calprotectin (S100A8/9) interacts with CEACAM3 and tubulin filaments in a calcium-dependent manner. Heterotetrameric calprotectin (S100A8/A9) interacts with ANXA6 and associates with tubulin filaments in activated monocytes. S100A8 and calprotectin (S100A8/9) interact with NCF2/P67PHOX, RAC1 and RAC2. Calprotectin (S100A8/9) interacts with CYBA and CYBB. S100A8 interacts with AGER, ATP2A2 and with the heterodimeric complex formed by TLR4 and LY96. Calprotectin (S100A8/9) interacts with NOS2 to form the iNOS-S100A8/A9 transnitrosylase complex. Calprotectin (S100A8/9) interacts with CD69.

It is found in the secreted. The protein localises to the cytoplasm. It localises to the cytoskeleton. The protein resides in the cell membrane. With respect to regulation, calprotectin (S100A8/A9) activity on TLR4 signaling is inhibited by paquinimod. Functionally, S100A8 is a calcium- and zinc-binding protein which plays a prominent role in the regulation of inflammatory processes and immune response. It can induce neutrophil chemotaxis and adhesion. Predominantly found as calprotectin (S100A8/A9) which has a wide plethora of intra- and extracellular functions. The intracellular functions include: facilitating leukocyte arachidonic acid trafficking and metabolism, modulation of the tubulin-dependent cytoskeleton during migration of phagocytes and activation of the neutrophilic NADPH-oxidase. Also participates in regulatory T-cell differentiation together with CD69. Activates NADPH-oxidase by facilitating the enzyme complex assembly at the cell membrane, transferring arachidonic acid, an essential cofactor, to the enzyme complex and S100A8 contributes to the enzyme assembly by directly binding to NCF2/P67PHOX. The extracellular functions involve pro-inflammatory, antimicrobial, oxidant-scavenging and apoptosis-inducing activities. Its pro-inflammatory activity includes recruitment of leukocytes, promotion of cytokine and chemokine production, and regulation of leukocyte adhesion and migration. Acts as an alarmin or a danger associated molecular pattern (DAMP) molecule and stimulates innate immune cells via binding to pattern recognition receptors such as Toll-like receptor 4 (TLR4) and receptor for advanced glycation endproducts (AGER). Binding to TLR4 and AGER activates the MAP-kinase and NF-kappa-B signaling pathways resulting in the amplification of the pro-inflammatory cascade. Has antimicrobial activity towards bacteria and fungi and exerts its antimicrobial activity probably via chelation of Zn(2+) which is essential for microbial growth. Can induce cell death via autophagy and apoptosis and this occurs through the cross-talk of mitochondria and lysosomes via reactive oxygen species (ROS) and the process involves BNIP3. Can regulate neutrophil number and apoptosis by an anti-apoptotic effect; regulates cell survival via ITGAM/ITGB and TLR4 and a signaling mechanism involving MEK-ERK. Its role as an oxidant scavenger has a protective role in preventing exaggerated tissue damage by scavenging oxidants. The iNOS-S100A8/A9 transnitrosylase complex is proposed to direct selective inflammatory stimulus-dependent S-nitrosylation of multiple targets such as GAPDH, ANXA5, EZR, MSN and VIM by recognizing a [IL]-x-C-x-x-[DE] motif; S100A8 seems to contribute to S-nitrosylation site selectivity. In terms of biological role, (Microbial infection) Upon infection by murine coronavirus (MHV-A59), induces expansion of aberrant immature neutrophils in a TLR4-dependent manner. In Mus musculus (Mouse), this protein is Protein S100-A8.